A 643-amino-acid polypeptide reads, in one-letter code: Protein disulfide-isomerase A4 (643 aa).

The signal sequence occupies residues 1–20 (MRPRKAWMLVLLLALVQLLA). Thioredoxin domains lie at 21-168 (VASA…EVSQ) and 170-300 (NWTP…EFLK). The segment at 24 to 54 (AGAPDEDSTDKEDAIEEDEEEDEDDDDDDDD) is disordered. A compositionally biased stretch (acidic residues) spans 27–54 (PDEDSTDKEDAIEEDEEEDEDDDDDDDD). The CXXC motif lies at 90–93 (CGHC). Intrachain disulfides connect Cys90–Cys93 and Cys205–Cys208. Lys365 carries the N6-acetyllysine modification. In terms of domain architecture, Thioredoxin 3 spans 503-634 (FKKGKLKPVI…LSKFIEEHAT (132 aa)). Residues 553–556 (CGHC) carry the CXXC motif. Cys553 and Cys556 are disulfide-bonded. Residues 640–643 (KEEL) carry the Prevents secretion from ER motif.

Belongs to the protein disulfide isomerase family. As to quaternary structure, part of a large chaperone multiprotein complex comprising DNAJB11, HSP90B1, HSPA5, HYOU, PDIA2, PDIA4, PDIA6, PPIB, SDF2L1, UGGT1 and very small amounts of ERP29, but not, or at very low levels, CALR nor CANX. Component of a complex containing at least CRELD2, MANF, MATN3 and PDIA4.

It localises to the endoplasmic reticulum lumen. It is found in the melanosome. It carries out the reaction Catalyzes the rearrangement of -S-S- bonds in proteins.. The protein is Protein disulfide-isomerase A4 (PDIA4) of Bos taurus (Bovine).